The sequence spans 429 residues: MVPEVRVLSSLLGLALLWFPLDSHARARPDMFCLFHGKRYSPGESWHPYLEPQGLMYCLRCTCSEGAHVSCYRLHCPPVHCPQPVTEPQQCCPKCVEPHTPSGLRAPPKSCQHNGTMYQHGEIFSAHELFPSRLPNQCVLCSCTEGQIYCGLTTCPEPGCPAPLPLPDSCCQACKDEASEQSDEEDSVQSLHGVRHPQDPCSSDAGRKRGPGTPAPTGLSAPLSFIPRHFRPKGAGSTTVKIVLKEKHKKACVHGGKTYSHGEVWHPAFRAFGPLPCILCTCEDGRQDCQRVTCPTEYPCRHPEKVAGKCCKICPEDKADPGHSEISSTRCPKAPGRVLVHTSVSPSPDNLRRFALEHEASDLVEIYLWKLVKGIFHLTQIKKVRKQDFQKEAQHFRLLAGPHEGHWNVFLAQTLELKVTASPDKVTKT.

The signal sequence occupies residues 1-25 (MVPEVRVLSSLLGLALLWFPLDSHA). 2 VWFC domains span residues 31-96 (MFCL…PKCV) and 109-175 (KSCQ…QACK). N-linked (GlcNAc...) asparagine glycosylation occurs at N114. S182 is modified (phosphoserine; by FAM20C). A disordered region spans residues 182–224 (SDEEDSVQSLHGVRHPQDPCSSDAGRKRGPGTPAPTGLSAPLS). In terms of domain architecture, VWFC 3 spans 250–315 (KACVHGGKTY…VAGKCCKICP (66 aa)).

Interacts with GDF5. May interact with BMP2, BMP4, BMP5, BMP6, BMP7 and INHBA. Post-translationally, phosphorylated by FAM20C in the extracellular medium. In terms of tissue distribution, highly expressed in uterus. Moderately expressed in heart, liver, prostate, testis and ovary. Weakly expressed in skeletal muscle, kidney, spleen, small intestine and colon. Expressed in the secretory epithelial cells of uterine endometrium, fallopian tubes, endocervical glands, bladder and prostate, as well as the transitional epithelium of the urinary bladder, and in bone osteoblasts (at protein level). In normal cartilage, expression was confined in a few chondrocytes in the superficial zone as well as in the middle zone. In diseased cartilage coming from osteoarthritic patients, expression was limited to the middle zone of chondrocytes. Isoform 1 and isoform 2 are expressed in fetal cerebellum and heart, while only isoform 2 is detected in fetal spleen. Isoform 2 present in plasma.

It localises to the secreted. Its subcellular location is the cytoplasm. Functionally, may inhibit BMPs activity by blocking their interaction with their receptors. Has a negative regulator effect on the cartilage formation/regeneration from immature mesenchymal cells, by preventing or reducing the rate of matrix accumulation. Implicated in tumor angiogenesis. May play a role during myoblast and osteoblast differentiation, and maturation. This chain is Chordin-like protein 2 (CHRDL2), found in Homo sapiens (Human).